The primary structure comprises 246 residues: Polyhedrin (246 aa).

The protein belongs to the polyhedrin family.

Functionally, major component of the virus occlusion bodies, which are large proteinaceous structures (polyhedra), that protect the virus from the outside environment for extended periods until they are ingested by insect larvae. The protein is Polyhedrin (PH) of Lepidoptera (butterflies and moths).